The following is a 140-amino-acid chain: Sex-regulated protein janus-B (140 aa).

Residue arginine 42 participates in substrate binding. Histidine 69 acts as the Proton acceptor in catalysis. A substrate-binding site is contributed by 110 to 112 (SRT).

The protein belongs to the janus family.

JanA and janB regulate somatic sex differentiation. This chain is Sex-regulated protein janus-B (janB), found in Drosophila erecta (Fruit fly).